Reading from the N-terminus, the 340-residue chain is Dihydroorotate dehydrogenase (quinone) (340 aa).

FMN is bound by residues 61–65 (AGLDK) and Thr85. Substrate is bound at residue Lys65. 110 to 114 (NRMGF) provides a ligand contact to substrate. The FMN site is built by Asn138 and Asn171. Substrate is bound at residue Asn171. The Nucleophile role is filled by Ser174. Asn176 is a substrate binding site. Lys216 and Thr244 together coordinate FMN. 245-246 (NT) provides a ligand contact to substrate. FMN contacts are provided by residues Gly267, Gly296, and 317–318 (YT).

This sequence belongs to the dihydroorotate dehydrogenase family. Type 2 subfamily. As to quaternary structure, monomer. It depends on FMN as a cofactor.

The protein resides in the cell membrane. The enzyme catalyses (S)-dihydroorotate + a quinone = orotate + a quinol. The protein operates within pyrimidine metabolism; UMP biosynthesis via de novo pathway; orotate from (S)-dihydroorotate (quinone route): step 1/1. Functionally, catalyzes the conversion of dihydroorotate to orotate with quinone as electron acceptor. The chain is Dihydroorotate dehydrogenase (quinone) from Marinobacter nauticus (strain ATCC 700491 / DSM 11845 / VT8) (Marinobacter aquaeolei).